Consider the following 282-residue polypeptide: DNA processing protein DprA (282 aa).

The protein belongs to the DprA/Smf family. Homodimer; forms tail-to-tail dimers, forms nucleoprotein complex (NPC) which requires at least 30 nucleotides (nt) of ssDNA becoming optimal with 50 nt. Interacts with RecA, forms mixed DprA-RecA-ssDNA filaments. Interacts with ComFA and ComFC.

It is found in the cytoplasm. In terms of biological role, protein that helps load RecA onto ssDNA during transformation. Required for DNA transformation. Not required for DNA uptake but for a later stage of transformation. Thought to interact at the cell pole with newly imported transforming ssDNA which it binds cooperatively, protecting linear and circular ssDNA from nuclease action. Forms bridges between DNA segments. Favors the loading of RecA onto ssDNA and formation of RecA-DNA filaments, triggering RecA-catalysis of ATP-driven homologous DNA pairing. The protein is DNA processing protein DprA of Streptococcus pneumoniae (strain ATCC BAA-255 / R6).